Reading from the N-terminus, the 216-residue chain is Guanylate kinase (216 aa).

The Guanylate kinase-like domain occupies 15 to 193 (GNLFMVVAPS…ALEELRNVVR (179 aa)). 22-29 (APSGAGKS) provides a ligand contact to ATP.

The protein belongs to the guanylate kinase family.

The protein resides in the cytoplasm. It carries out the reaction GMP + ATP = GDP + ADP. In terms of biological role, essential for recycling GMP and indirectly, cGMP. In Cupriavidus pinatubonensis (strain JMP 134 / LMG 1197) (Cupriavidus necator (strain JMP 134)), this protein is Guanylate kinase.